The chain runs to 425 residues: Enolase (425 aa).

Glutamine 162 is a binding site for (2R)-2-phosphoglycerate. Catalysis depends on glutamate 204, which acts as the Proton donor. Residues aspartate 241, glutamate 282, and aspartate 309 each contribute to the Mg(2+) site. (2R)-2-phosphoglycerate-binding residues include lysine 334, arginine 363, serine 364, and lysine 385. Lysine 334 functions as the Proton acceptor in the catalytic mechanism.

Belongs to the enolase family. The cofactor is Mg(2+).

The protein localises to the cytoplasm. Its subcellular location is the secreted. It is found in the cell surface. The catalysed reaction is (2R)-2-phosphoglycerate = phosphoenolpyruvate + H2O. It participates in carbohydrate degradation; glycolysis; pyruvate from D-glyceraldehyde 3-phosphate: step 4/5. Its function is as follows. Catalyzes the reversible conversion of 2-phosphoglycerate (2-PG) into phosphoenolpyruvate (PEP). It is essential for the degradation of carbohydrates via glycolysis. The protein is Enolase of Micrococcus luteus (strain ATCC 4698 / DSM 20030 / JCM 1464 / CCM 169 / CCUG 5858 / IAM 1056 / NBRC 3333 / NCIMB 9278 / NCTC 2665 / VKM Ac-2230) (Micrococcus lysodeikticus).